We begin with the raw amino-acid sequence, 266 residues long: Phosphatidylglycerol--prolipoprotein diacylglyceryl transferase (266 aa).

Helical transmembrane passes span isoleucine 19–alanine 39, leucine 61–tyrosine 81, leucine 91–isoleucine 111, phenylalanine 125–isoleucine 145, proline 176–phenylalanine 196, glycine 204–phenylalanine 224, and glycine 237–valine 257. Arginine 144 serves as a coordination point for a 1,2-diacyl-sn-glycero-3-phospho-(1'-sn-glycerol).

It belongs to the Lgt family.

It localises to the cell inner membrane. The enzyme catalyses L-cysteinyl-[prolipoprotein] + a 1,2-diacyl-sn-glycero-3-phospho-(1'-sn-glycerol) = an S-1,2-diacyl-sn-glyceryl-L-cysteinyl-[prolipoprotein] + sn-glycerol 1-phosphate + H(+). It participates in protein modification; lipoprotein biosynthesis (diacylglyceryl transfer). Its function is as follows. Catalyzes the transfer of the diacylglyceryl group from phosphatidylglycerol to the sulfhydryl group of the N-terminal cysteine of a prolipoprotein, the first step in the formation of mature lipoproteins. This chain is Phosphatidylglycerol--prolipoprotein diacylglyceryl transferase, found in Idiomarina loihiensis (strain ATCC BAA-735 / DSM 15497 / L2-TR).